A 475-amino-acid chain; its full sequence is Probable proline--tRNA ligase, mitochondrial (475 aa).

The transit peptide at 1 to 29 directs the protein to the mitochondrion; that stretch reads MEGLLTRCRTLSALATCSLRHSRCIVRKC.

It belongs to the class-II aminoacyl-tRNA synthetase family.

It localises to the mitochondrion matrix. The catalysed reaction is tRNA(Pro) + L-proline + ATP = L-prolyl-tRNA(Pro) + AMP + diphosphate. Mitochondrial aminoacyl-tRNA synthetase that catalyzes the specific attachment of the proline amino acid (aa) to the homologous transfer RNA (tRNA), further participating in protein synthesis. The reaction occurs in a two steps: proline is first activated by ATP to form Pro-AMP and then transferred to the acceptor end of tRNA(Pro). In Rattus norvegicus (Rat), this protein is Probable proline--tRNA ligase, mitochondrial (Pars2).